Here is a 289-residue protein sequence, read N- to C-terminus: S-methyl-5'-thioadenosine phosphorylase (289 aa).

Phosphate is bound by residues Ser11, 53–54 (RH), and 86–87 (SA). Met187 provides a ligand contact to substrate. A phosphate-binding site is contributed by Thr188. 211–213 (DYD) lines the substrate pocket.

It belongs to the PNP/MTAP phosphorylase family. MTAP subfamily. As to quaternary structure, homohexamer. Dimer of a homotrimer.

The catalysed reaction is S-methyl-5'-thioadenosine + phosphate = 5-(methylsulfanyl)-alpha-D-ribose 1-phosphate + adenine. The protein operates within amino-acid biosynthesis; L-methionine biosynthesis via salvage pathway; S-methyl-5-thio-alpha-D-ribose 1-phosphate from S-methyl-5'-thioadenosine (phosphorylase route): step 1/1. Its function is as follows. Catalyzes the reversible phosphorylation of S-methyl-5'-thioadenosine (MTA) to adenine and 5-methylthioribose-1-phosphate. Involved in the breakdown of MTA, a major by-product of polyamine biosynthesis. Responsible for the first step in the methionine salvage pathway after MTA has been generated from S-adenosylmethionine. Has broad substrate specificity with 6-aminopurine nucleosides as preferred substrates. The protein is S-methyl-5'-thioadenosine phosphorylase of Thermosynechococcus vestitus (strain NIES-2133 / IAM M-273 / BP-1).